The sequence spans 88 residues: Adenylosuccinate lyase (88 aa).

N(6)-(1,2-dicarboxyethyl)-AMP contacts are provided by residues 4 to 5 (RY) and 67 to 69 (KHD).

Belongs to the lyase 1 family. Adenylosuccinate lyase subfamily. In terms of assembly, homotetramer and homodimer. Residues from neighboring subunits contribute catalytic and substrate-binding residues to each active site.

It carries out the reaction N(6)-(1,2-dicarboxyethyl)-AMP = fumarate + AMP. The enzyme catalyses (2S)-2-[5-amino-1-(5-phospho-beta-D-ribosyl)imidazole-4-carboxamido]succinate = 5-amino-1-(5-phospho-beta-D-ribosyl)imidazole-4-carboxamide + fumarate. Its pathway is purine metabolism; AMP biosynthesis via de novo pathway; AMP from IMP: step 2/2. It participates in purine metabolism; IMP biosynthesis via de novo pathway; 5-amino-1-(5-phospho-D-ribosyl)imidazole-4-carboxamide from 5-amino-1-(5-phospho-D-ribosyl)imidazole-4-carboxylate: step 2/2. Functionally, catalyzes two reactions in de novo purine nucleotide biosynthesis. Catalyzes the breakdown of 5-aminoimidazole- (N-succinylocarboxamide) ribotide (SAICAR or 2-[5-amino-1-(5-phospho-beta-D-ribosyl)imidazole-4-carboxamido]succinate) to 5-aminoimidazole-4-carboxamide ribotide (AICAR or 5-amino-1-(5-phospho-beta-D-ribosyl)imidazole-4-carboxamide) and fumarate, and of adenylosuccinate (ADS or N(6)-(1,2-dicarboxyethyl)-AMP) to adenosine monophosphate (AMP) and fumarate. This chain is Adenylosuccinate lyase (purB), found in Spiroplasma citri.